A 468-amino-acid polypeptide reads, in one-letter code: Beta-monoglucosyldiacylglycerol synthase (468 aa).

4 helical membrane-spanning segments follow: residues 51–71 (AALVLTIVWSGTIALHLVSWG), 72–92 (SIFILGLTTVLGIHALGVVFA), 358–378 (MLMFMLTMYILPTAAIPDLLM), and 387–407 (MLGPVTGLSVTMSVVGMFAGL).

Belongs to the glycosyltransferase 2 family. Mg(2+) is required as a cofactor.

It localises to the membrane. It catalyses the reaction a 1,2-diacyl-sn-glycerol + UDP-alpha-D-glucose = a 1,2-diacyl-3-O-(beta-D-glucopyranosyl)-sn-glycerol + UDP + H(+). Functionally, glucosyltransferase involved in the biosynthesis of the non-bilayer-forming membrane lipid beta-monoglucosyldiacylglycerol which contributes to regulate the properties and stability of the membrane. Catalyzes the transfer of a glucosyl residue from UDP-Glc to diacylglycerol (DAG) acceptor to form the corresponding beta-glucosyl-DAG (1,2-diacyl-3-O-(beta-D-glucopyranosyl)-sn-glycerol). It can only use UDP-Glc as sugar donor. Two types of DAG (dipalmitoyl-DAG (DPDAG) and 1-oleoyl-2-palmitoyl-DAG (OPDAG)) can be used as sugar acceptors, but OPDAG is preferred. The chain is Beta-monoglucosyldiacylglycerol synthase from Nostoc sp. (strain PCC 7120 / SAG 25.82 / UTEX 2576).